The following is an 898-amino-acid chain: Phosphoenolpyruvate carboxylase (898 aa).

Catalysis depends on residues His-138 and Lys-561.

This sequence belongs to the PEPCase type 1 family. Mg(2+) is required as a cofactor.

It catalyses the reaction oxaloacetate + phosphate = phosphoenolpyruvate + hydrogencarbonate. Functionally, forms oxaloacetate, a four-carbon dicarboxylic acid source for the tricarboxylic acid cycle. The protein is Phosphoenolpyruvate carboxylase of Streptococcus pneumoniae serotype 4 (strain ATCC BAA-334 / TIGR4).